The following is a 289-amino-acid chain: Probable porphobilinogen deaminase (289 aa).

At Cys-233 the chain carries S-(dipyrrolylmethanemethyl)cysteine.

Belongs to the HMBS family. Requires dipyrromethane as cofactor.

The catalysed reaction is 4 porphobilinogen + H2O = hydroxymethylbilane + 4 NH4(+). It functions in the pathway porphyrin-containing compound metabolism; protoporphyrin-IX biosynthesis; coproporphyrinogen-III from 5-aminolevulinate: step 2/4. Its function is as follows. Tetrapolymerization of the monopyrrole PBG into the hydroxymethylbilane pre-uroporphyrinogen in several discrete steps. The sequence is that of Probable porphobilinogen deaminase (hemC) from Methanothermobacter thermautotrophicus (strain ATCC 29096 / DSM 1053 / JCM 10044 / NBRC 100330 / Delta H) (Methanobacterium thermoautotrophicum).